The chain runs to 306 residues: tRNA-cytidine(32) 2-sulfurtransferase (306 aa).

The interval 1-25 is disordered; the sequence is MSAVISLPDPQPRAARDPRVAEREQ. A compositionally biased stretch (basic and acidic residues) spans 14 to 25; the sequence is AARDPRVAEREQ. The short motif at 57–62 is the PP-loop motif element; it reads SGGKDS. 3 residues coordinate [4Fe-4S] cluster: C132, C135, and C223. The tract at residues 286–306 is disordered; it reads AHAWLAGSPADADADPETPTV. Acidic residues predominate over residues 297-306; it reads ADADPETPTV.

The protein belongs to the TtcA family. In terms of assembly, homodimer. Mg(2+) is required as a cofactor. The cofactor is [4Fe-4S] cluster.

The protein resides in the cytoplasm. The catalysed reaction is cytidine(32) in tRNA + S-sulfanyl-L-cysteinyl-[cysteine desulfurase] + AH2 + ATP = 2-thiocytidine(32) in tRNA + L-cysteinyl-[cysteine desulfurase] + A + AMP + diphosphate + H(+). The protein operates within tRNA modification. Its function is as follows. Catalyzes the ATP-dependent 2-thiolation of cytidine in position 32 of tRNA, to form 2-thiocytidine (s(2)C32). The sulfur atoms are provided by the cysteine/cysteine desulfurase (IscS) system. This Stenotrophomonas maltophilia (strain K279a) protein is tRNA-cytidine(32) 2-sulfurtransferase.